We begin with the raw amino-acid sequence, 671 residues long: DNA ligase (671 aa).

Residues 32–36, 81–82, and glutamate 113 each bind NAD(+); these read DAEYD and SL. The N6-AMP-lysine intermediate role is filled by lysine 115. Residues arginine 136, glutamate 173, lysine 290, and lysine 314 each contribute to the NAD(+) site. Positions 408, 411, 426, and 432 each coordinate Zn(2+). Residues 593–671 enclose the BRCT domain; sequence EIDSPFAGKT…EAEMIRLLGA (79 aa).

The protein belongs to the NAD-dependent DNA ligase family. LigA subfamily. It depends on Mg(2+) as a cofactor. Requires Mn(2+) as cofactor.

It carries out the reaction NAD(+) + (deoxyribonucleotide)n-3'-hydroxyl + 5'-phospho-(deoxyribonucleotide)m = (deoxyribonucleotide)n+m + AMP + beta-nicotinamide D-nucleotide.. DNA ligase that catalyzes the formation of phosphodiester linkages between 5'-phosphoryl and 3'-hydroxyl groups in double-stranded DNA using NAD as a coenzyme and as the energy source for the reaction. It is essential for DNA replication and repair of damaged DNA. The chain is DNA ligase from Salmonella dublin (strain CT_02021853).